A 145-amino-acid polypeptide reads, in one-letter code: Transcriptional regulator MraZ (145 aa).

2 SpoVT-AbrB domains span residues 5–47 and 76–119; these read EHQH…PLPE and AVEC…AKDQ.

The protein belongs to the MraZ family. As to quaternary structure, forms oligomers.

The protein localises to the cytoplasm. It is found in the nucleoid. The chain is Transcriptional regulator MraZ from Pelotomaculum thermopropionicum (strain DSM 13744 / JCM 10971 / SI).